A 201-amino-acid chain; its full sequence is Small ribosomal subunit protein uS4 (201 aa).

Residues 91–157 enclose the S4 RNA-binding domain; sequence SRLDNVVYRA…LPFQVARETV (67 aa).

The protein belongs to the universal ribosomal protein uS4 family. Part of the 30S ribosomal subunit. Contacts protein S5. The interaction surface between S4 and S5 is involved in control of translational fidelity.

In terms of biological role, one of the primary rRNA binding proteins, it binds directly to 16S rRNA where it nucleates assembly of the body of the 30S subunit. Its function is as follows. With S5 and S12 plays an important role in translational accuracy. This chain is Small ribosomal subunit protein uS4, found in Rhodococcus erythropolis (strain PR4 / NBRC 100887).